A 1227-amino-acid polypeptide reads, in one-letter code: Beta-alanyl-bioamine nonribosomal peptide synthetase (1227 aa).

Positions 1-850 (MPQSTAQLKS…FGKNSRDFKL (850 aa)) are adenylation. A Carrier domain is found at 851-931 (SRGRERARKV…SILTSLQNTE (81 aa)). Position 892 is an O-(pantetheine 4'-phosphoryl)serine (Ser892). A condensation region spans residues 932-1227 (SDFLKTQEPF…YMIKELNPSS (296 aa)).

It belongs to the NRP synthetase family. The cofactor is pantetheine 4'-phosphate. As to expression, in virgin and paired males, bilaterally expressed in some cells in the head. During pairing, expressed throughout the ventral side of the body probably in ciliated neurons. Highly expressed in virgin females in cells throughout the body and only weakly expressed in sexually mature females. In virgin females, expressed in some cells in the head and on the dorsal surface and lateral edges of body.

It catalyses the reaction tryptamine + beta-alanine + ATP = beta-alanyl-tryptamine + AMP + diphosphate + H(+). The catalysed reaction is beta-alanine + ATP + H(+) = beta-alanyl-5'-AMP + diphosphate. The enzyme catalyses beta-alanyl-5'-AMP + holo-[peptidyl-carrier protein] = beta-alanyl-[peptidyl-carrier protein] + AMP + H(+). It carries out the reaction beta-alanyl-[peptidyl-carrier protein] + tryptamine = beta-alanyl-tryptamine + holo-[peptidyl-carrier protein] + H(+). Its function is as follows. Catalyzes the condensation of beta-alanine with tryptamine to form beta-alanyl-tryptamine (BATT). Beta-alanyl-tryptamine is an essential pheromone produced by the male that stimulates female sexual development during pairing. This Schistosoma mansoni (Blood fluke) protein is Beta-alanyl-bioamine nonribosomal peptide synthetase.